The sequence spans 283 residues: Prolyl 4-hydroxylase 1 (283 aa).

At 1-6 (MAPAMK) the chain is on the cytoplasmic side. A helical; Signal-anchor for type II membrane protein transmembrane segment spans residues 7–27 (IVFGLLTFVTVGMVIGSLLQL). Residues 28 to 283 (AFINRLEDSY…TKWMRQKATS (256 aa)) are Lumenal-facing. In terms of domain architecture, Fe2OG dioxygenase spans 162–279 (NGELIQVLRY…KWSATKWMRQ (118 aa)). His-180, Asp-182, and His-260 together coordinate Fe cation. Lys-270 lines the 2-oxoglutarate pocket.

Belongs to the P4HA family. Fe(2+) serves as cofactor. Requires L-ascorbate as cofactor.

Its subcellular location is the endoplasmic reticulum membrane. It catalyses the reaction L-prolyl-[collagen] + 2-oxoglutarate + O2 = trans-4-hydroxy-L-prolyl-[collagen] + succinate + CO2. Functionally, catalyzes the post-translational formation of 4-hydroxyproline in -Xaa-Pro-Gly- sequences in proline-rich peptide sequences of plant glycoproteins and other proteins. Hydroxylates preferentially prolines in second positions in the -Pro-Pro-Gly-triplets. Hydroxyprolines are important constituent of many plant cell wall glycoproteins such as extensins, hydroxyproline-rich glycoproteins, lectins and arabinogalactan proteins. Can hydroxylate collagen-like peptides and hypoxia-inducible transcription factor peptides. In Arabidopsis thaliana (Mouse-ear cress), this protein is Prolyl 4-hydroxylase 1.